The sequence spans 558 residues: Scarecrow-like protein 6 (558 aa).

A disordered region spans residues phenylalanine 19–cysteine 90. Residues serine 54–asparagine 75 show a composition bias toward low complexity. The 359-residue stretch at lysine 196–arginine 554 folds into the GRAS domain. The interval valine 203–leucine 257 is leucine repeat I (LRI). The VHIID stretch occupies residues tyrosine 276–isoleucine 340. A VHIID motif is present at residues leucine 307 to aspartate 311. The leucine repeat II (LRII) stretch occupies residues phenylalanine 356–proline 388. A PFYRE region spans residues valine 396–lysine 479. The segment at leucine 482–arginine 554 is SAW.

The protein belongs to the GRAS family. As to quaternary structure, interacts with Meloidogyne incognita 16D10. As to expression, expressed in seedlings, roots, leaves, flowers and siliques.

The protein localises to the nucleus. Functionally, probable transcription factor involved in plant development. The chain is Scarecrow-like protein 6 (SCL6) from Arabidopsis thaliana (Mouse-ear cress).